The primary structure comprises 410 residues: Arginine deiminase (410 aa).

The active-site Amidino-cysteine intermediate is the C399.

It belongs to the arginine deiminase family.

The protein resides in the cytoplasm. It catalyses the reaction L-arginine + H2O = L-citrulline + NH4(+). The protein operates within amino-acid degradation; L-arginine degradation via ADI pathway; carbamoyl phosphate from L-arginine: step 1/2. In Listeria monocytogenes serotype 4a (strain HCC23), this protein is Arginine deiminase.